A 643-amino-acid polypeptide reads, in one-letter code: Probable potassium transport system protein Kup 2 (643 aa).

Positions 1–20 are disordered; the sequence is MSSHVPSFLRGTPDMTAHGG. The next 12 membrane-spanning stretches (helical) occupy residues 27 to 47, 70 to 90, 120 to 140, 157 to 177, 185 to 205, 231 to 251, 267 to 287, 300 to 320, 357 to 377, 389 to 409, 419 to 439, and 440 to 460; these read VAGL…TSPL, VLSL…VIII, LMVS…SIIT, PHLE…LFAI, VGKM…ILGI, GWHA…AEAL, WYLL…ALLI, LAPA…TVIA, IYLP…VVGF, VAVT…MLLI, WLIG…SIKI, and PDGG…LTTW.

Belongs to the HAK/KUP transporter (TC 2.A.72) family.

The protein localises to the cell inner membrane. It catalyses the reaction K(+)(in) + H(+)(in) = K(+)(out) + H(+)(out). Functionally, transport of potassium into the cell. Likely operates as a K(+):H(+) symporter. The polypeptide is Probable potassium transport system protein Kup 2 (Paramagnetospirillum magneticum (strain ATCC 700264 / AMB-1) (Magnetospirillum magneticum)).